The primary structure comprises 256 residues: 5-keto-4-deoxy-D-glucarate aldolase (256 aa).

The active-site Proton acceptor is His-50. Gln-151 is a substrate binding site. Glu-153 provides a ligand contact to Mg(2+). The substrate site is built by Ser-178 and Asp-179. Mg(2+) is bound at residue Asp-179.

This sequence belongs to the HpcH/HpaI aldolase family. KDGluc aldolase subfamily. In terms of assembly, homohexamer; trimer of dimers. It depends on Mg(2+) as a cofactor.

The enzyme catalyses 5-dehydro-4-deoxy-D-glucarate = 2-hydroxy-3-oxopropanoate + pyruvate. It catalyses the reaction 2-dehydro-3-deoxy-D-glucarate = 2-hydroxy-3-oxopropanoate + pyruvate. The protein operates within carbohydrate acid metabolism; galactarate degradation; D-glycerate from galactarate: step 2/3. Its function is as follows. Catalyzes the reversible retro-aldol cleavage of both 5-keto-4-deoxy-D-glucarate and 2-keto-3-deoxy-D-glucarate to pyruvate and tartronic semialdehyde. This Escherichia coli (strain K12 / DH10B) protein is 5-keto-4-deoxy-D-glucarate aldolase.